A 403-amino-acid chain; its full sequence is 8-amino-7-oxononanoate synthase (403 aa).

R25 contributes to the substrate binding site. 112–113 (GY) contributes to the pyridoxal 5'-phosphate binding site. H137 provides a ligand contact to substrate. Pyridoxal 5'-phosphate is bound by residues S182, H210, and T239. At K242 the chain carries N6-(pyridoxal phosphate)lysine. T358 serves as a coordination point for substrate.

Belongs to the class-II pyridoxal-phosphate-dependent aminotransferase family. BioF subfamily. As to quaternary structure, homodimer. Pyridoxal 5'-phosphate serves as cofactor.

It catalyses the reaction 6-carboxyhexanoyl-[ACP] + L-alanine + H(+) = (8S)-8-amino-7-oxononanoate + holo-[ACP] + CO2. The protein operates within cofactor biosynthesis; biotin biosynthesis. Its function is as follows. Catalyzes the decarboxylative condensation of pimeloyl-[acyl-carrier protein] and L-alanine to produce 8-amino-7-oxononanoate (AON), [acyl-carrier protein], and carbon dioxide. The polypeptide is 8-amino-7-oxononanoate synthase (Marinomonas sp. (strain MWYL1)).